We begin with the raw amino-acid sequence, 387 residues long: 3-ketoacyl-CoA thiolase (387 aa).

The Acyl-thioester intermediate role is filled by C91. Active-site proton acceptor residues include H343 and C373.

This sequence belongs to the thiolase-like superfamily. Thiolase family. In terms of assembly, heterotetramer of two alpha chains (FadB) and two beta chains (FadA).

It is found in the cytoplasm. It carries out the reaction an acyl-CoA + acetyl-CoA = a 3-oxoacyl-CoA + CoA. Its pathway is lipid metabolism; fatty acid beta-oxidation. Catalyzes the final step of fatty acid oxidation in which acetyl-CoA is released and the CoA ester of a fatty acid two carbons shorter is formed. The chain is 3-ketoacyl-CoA thiolase from Shewanella denitrificans (strain OS217 / ATCC BAA-1090 / DSM 15013).